Consider the following 287-residue polypeptide: uncharacterized protein (287 aa).

Residues 115-287 (PQNFDREWNP…NLAIELLKAI (173 aa)) form the ATP-grasp domain. ATP-binding positions include Lys145 and 178–188 (QKYITCSKGES). Residues Asp248, Glu261, and Asn263 each contribute to the Mg(2+) site. Residues Asp248, Glu261, and Asn263 each contribute to the Mn(2+) site.

The protein belongs to the RimK family.

This is an uncharacterized protein from Mycoplasma genitalium (strain ATCC 33530 / DSM 19775 / NCTC 10195 / G37) (Mycoplasmoides genitalium).